A 245-amino-acid polypeptide reads, in one-letter code: MMKIKRFVYSLPEEEFYELVYSQNLSVEVLERKEIEVIFASYKEIEGLTPEKVEEVKEDWENWKEKFKPIEVEDFVIIPSWKKPVIVKPGLAFGTGLHPTTQLCIKALKKYLKEGMTVLDVGTGSGILAIVSALLGAKRVVGIDIDEKAVNECRENAELNKVKVECFRAEPKDVNESFDLVVANLEIHIFERVLKDILPKFKKIGIFSGLYKEKDLKRFEELLGGLKVKEVFEKENWYAVVVEKG.

Residues T101, G122, D144, and N184 each coordinate S-adenosyl-L-methionine.

The protein belongs to the methyltransferase superfamily. PrmA family.

It is found in the cytoplasm. The enzyme catalyses L-lysyl-[protein] + 3 S-adenosyl-L-methionine = N(6),N(6),N(6)-trimethyl-L-lysyl-[protein] + 3 S-adenosyl-L-homocysteine + 3 H(+). Its function is as follows. Methylates ribosomal protein L11. The polypeptide is Ribosomal protein L11 methyltransferase (Aquifex aeolicus (strain VF5)).